Here is a 233-residue protein sequence, read N- to C-terminus: Lectin (233 aa).

2 N-linked (GlcNAc...) asparagine glycosylation sites follow: Asn26 and Asn108. 2 residues coordinate Mn(2+): Glu118 and Asp120. Residues Asp120, Trp122, Asn124, and Glu129 each contribute to the Ca(2+) site. Glu129 and His134 together coordinate Mn(2+).

This sequence belongs to the leguminous lectin family. In terms of assembly, monomer.

It is found in the secreted. Functionally, has metal-independent hemagglutinating activity towards erythrocytes from rabbit and human. Hemagglutinating activity is inhibited by glycoproteins fetuin, asialo-fetuin, thyroglobulin and azocasein but not by free carbohydrates. Inhibits ADP- and epinephrin-induced but not collagen-, fibrinogen, thrombin- or arachidonic acid-induced platelet aggregation in vitro. Has anticoagulant activity in vitro. This chain is Lectin, found in Bauhinia forficata (Brazilian orchid-tree).